The sequence spans 163 residues: MASITQAAKSLLLKEFASAFALSMRQFFAPKATLNYPHEKGPVSPRFRGEHALRRYPNGEERCIACKLCEAICPAQAITIEAGPRRNDGTRRTVRYDIDMVKCIYCGFCQEACPVDAIVEGPNFEFATETREELYYDKDKLLANGDRWELEIARNIAMDAPYR.

4Fe-4S ferredoxin-type domains lie at leucine 53 to glycine 83 and valine 94 to asparagine 123. [4Fe-4S] cluster contacts are provided by cysteine 63, cysteine 66, cysteine 69, cysteine 73, cysteine 103, cysteine 106, cysteine 109, and cysteine 113.

Belongs to the complex I 23 kDa subunit family. In terms of assembly, NDH-1 is composed of 14 different subunits. Subunits NuoA, H, J, K, L, M, N constitute the membrane sector of the complex. The cofactor is [4Fe-4S] cluster.

The protein localises to the cell inner membrane. The enzyme catalyses a quinone + NADH + 5 H(+)(in) = a quinol + NAD(+) + 4 H(+)(out). NDH-1 shuttles electrons from NADH, via FMN and iron-sulfur (Fe-S) centers, to quinones in the respiratory chain. The immediate electron acceptor for the enzyme in this species is believed to be ubiquinone. Couples the redox reaction to proton translocation (for every two electrons transferred, four hydrogen ions are translocated across the cytoplasmic membrane), and thus conserves the redox energy in a proton gradient. The sequence is that of NADH-quinone oxidoreductase subunit I from Brucella suis (strain ATCC 23445 / NCTC 10510).